The chain runs to 477 residues: Delayed-rectifier potassium channel regulatory subunit KCNS2 (477 aa).

At 1–184 (MTGQSLWDVS…LALDNPGYSV (184 aa)) the chain is on the cytoplasmic side. The helical transmembrane segment at 185–206 (LSRVFSILSILVVMGSIITMCL) threads the bilayer. Over 207-225 (NSLPDFQIPDSQGNPGEDP) the chain is Extracellular. Residues 226–248 (RFEIVEHFGIAWFTFELVARFAV) traverse the membrane as a helical segment. Residues 249-259 (APDFLKFFKNA) are Cytoplasmic-facing. Residues 260–280 (LNLIDLMSIVPFYITLVVNLV) form a helical membrane-spanning segment. At 281 to 290 (VESTPTLANL) the chain is on the extracellular side. Residues 291–311 (GRVAQVLRLMRIFRILKLARH) traverse the membrane as a helical; Voltage-sensor segment. Residues 312–326 (STGLRSLGATLKYSY) are Cytoplasmic-facing. Residues 327-348 (KEVGLLLLYLSVGISIFSVVAY) form a helical membrane-spanning segment. Over 349–361 (TIEKEENEGLATI) the chain is Extracellular. Residues 362–373 (PACWWWATVSMT) constitute an intramembrane region (helical). Residues 374-379 (TVGYGD) carry the Selectivity filter motif. An intramembrane segment occupies 374-381 (TVGYGDVV). The Extracellular segment spans residues 382–388 (PGTTAGK). Residues 389-417 (LTASACILAGILVVVLPITLIFNKFSHFY) form a helical membrane-spanning segment. At 418–477 (RRQKQLESAMRSCDFGDGMKEVPSVNLRDYYAHKVKSLMASLTNMSRSSPSELSLNDSLR) the chain is on the cytoplasmic side.

This sequence belongs to the potassium channel family. S (TC 1.A.1.2) subfamily. Kv9.2/KCNS2 sub-subfamily. As to quaternary structure, heterotetramer with KCNB1 and KCNB2. Does not form homomultimers.

Its subcellular location is the cell membrane. Functionally, potassium channel regulatory subunit that modulate the delayed rectifier voltage-gated potassium channel activity of KCNB1 and KCNB2 by altering their kinetics, expression levels, and shifting the half-inactivation potential to more polarized values. While it does not form functional channels on its own, it can form functional heterotetrameric channels with KCNB1 and KCNB2. Each regulatory subunit has unique regulatory properties that can lead to extensive inhibition, significant changes in kinetics, and/or substantial shifts in the voltage dependencies of the inactivation process. This Homo sapiens (Human) protein is Delayed-rectifier potassium channel regulatory subunit KCNS2.